The sequence spans 113 residues: MGGLEPCSRLLLLPLLLAVGGLRPVQAQAQSDCSCSTVSPGVLAGIVMGDLVLTVLIALAVYFLGRLVHRGRGAAEAATRKQRITETESPYQELQGQRSDVYSDLNMQRPYYK.

The N-terminal stretch at 1-27 (MGGLEPCSRLLLLPLLLAVGGLRPVQA) is a signal peptide. The Extracellular segment spans residues 28–40 (QAQSDCSCSTVSP). The helical transmembrane segment at 41 to 61 (GVLAGIVMGDLVLTVLIALAV) threads the bilayer. Asp50 is a Ca(2+) binding site. The Cytoplasmic portion of the chain corresponds to 62–113 (YFLGRLVHRGRGAAEAATRKQRITETESPYQELQGQRSDVYSDLNMQRPYYK). A disordered region spans residues 75 to 113 (AEAATRKQRITETESPYQELQGQRSDVYSDLNMQRPYYK). Positions 80-108 (RKQRITETESPYQELQGQRSDVYSDLNMQ) constitute an ITAM domain. The segment covering 87–100 (TESPYQELQGQRSD) has biased composition (polar residues). Tyr91 and Tyr102 each carry phosphotyrosine.

It belongs to the TYROBP family. Homodimer; disulfide-linked. Homotrimer; disulfide-linked. Homotetramer; disulfide-linked. Homotrimers and homotetramers form when low levels of partner receptors are available and is competitive with assembly with interacting receptors. They may represent alternative oligomerization states or may be intermediates in the receptor assembly process. Binding of a metal cation aids in homooligomerization through coordination of the metal ion by the subunits of the oligomer. Interacts with TREM1. Interacts with TREM2. Interacts with CLECSF5. Interacts with CD300LB and CD300C2. Interacts with CD300E. Interacts (via ITAM domain) with SYK (via SH2 domains); activates SYK mediating neutrophils and macrophages integrin-mediated activation. Interacts with KLRC2. Interacts with CD300H. Interacts with KLRD1. Interacts with SIGLEC1. Post-translationally, following ligand binding by associated receptors, tyrosine phosphorylated in the ITAM domain which leads to activation of additional tyrosine kinases and subsequent cell activation.

The protein localises to the cell membrane. Functionally, adapter protein which non-covalently associates with activating receptors found on the surface of a variety of immune cells to mediate signaling and cell activation following ligand binding by the receptors. TYROBP is tyrosine-phosphorylated in the ITAM domain following ligand binding by the associated receptors which leads to activation of additional tyrosine kinases and subsequent cell activation. Also has an inhibitory role in some cells. Non-covalently associates with activating receptors of the CD300 family to mediate cell activation. Also mediates cell activation through association with activating receptors of the CD200R family. Required for neutrophil activation mediated by integrin. Required for the activation of myeloid cells mediated by the CLEC5A/MDL1 receptor. Associates with natural killer (NK) cell receptors such as the KLRD1/KLRC2 heterodimer to mediate NK cell activation. Associates with TREM1 to mediate activation of neutrophils and monocytes. Associates with TREM2 on monocyte-derived dendritic cells to mediate up-regulation of chemokine receptor CCR7 and dendritic cell maturation and survival. Association with TREM2 mediates cytokine-induced formation of multinucleated giant cells which are formed by the fusion of macrophages. Stabilizes the TREM2 C-terminal fragment (TREM2-CTF) produced by TREM2 ectodomain shedding which suppresses the release of pro-inflammatory cytokines. In microglia, required with TREM2 for phagocytosis of apoptotic neurons. Required with ITGAM/CD11B in microglia to control production of microglial superoxide ions which promote the neuronal apoptosis that occurs during brain development. Promotes pro-inflammatory responses in microglia following nerve injury which accelerates degeneration of injured neurons. Positively regulates the expression of the IRAK3/IRAK-M kinase and IL10 production by liver dendritic cells and inhibits their T cell allosimulatory ability. Negatively regulates B cell proliferation. Required for CSF1-mediated osteoclast cytoskeletal organization. Positively regulates multinucleation during osteoclast development. The protein is TYRO protein tyrosine kinase-binding protein of Pan troglodytes (Chimpanzee).